Reading from the N-terminus, the 330-residue chain is Aspartate--ammonia ligase (330 aa).

It belongs to the class-II aminoacyl-tRNA synthetase family. AsnA subfamily.

It is found in the cytoplasm. The catalysed reaction is L-aspartate + NH4(+) + ATP = L-asparagine + AMP + diphosphate + H(+). It participates in amino-acid biosynthesis; L-asparagine biosynthesis; L-asparagine from L-aspartate (ammonia route): step 1/1. The sequence is that of Aspartate--ammonia ligase from Streptococcus equi subsp. zooepidemicus (strain H70).